Consider the following 206-residue polypeptide: MERTLVLIRHGQSEWNLKNLFTGWKDPGLTEKGRTEAIAAGKKLKETGLKFDIAYTSALQRAQKTAQNILEQMEQSDLELIKTPALNERNYGDLSGLNKDEVRQKWGEQQVQIWRRSYTIAPPNGESLRDTGARVWPYYLHHIQPHILRSQTVLIAAHGNSLRALIMALEGLNSEEIISQELATGIPIVYTFNSDSTISSKTIITP.

Substrate-binding positions include 9–16 (RHGQSEWN), 22–23 (TG), Arg-61, 88–91 (ERNY), Lys-99, 115–116 (RR), and 159–160 (GN). The Tele-phosphohistidine intermediate role is filled by His-10. Glu-88 serves as the catalytic Proton donor/acceptor.

It belongs to the phosphoglycerate mutase family. BPG-dependent PGAM subfamily. As to quaternary structure, homodimer.

The enzyme catalyses (2R)-2-phosphoglycerate = (2R)-3-phosphoglycerate. It participates in carbohydrate degradation; glycolysis; pyruvate from D-glyceraldehyde 3-phosphate: step 3/5. Catalyzes the interconversion of 2-phosphoglycerate and 3-phosphoglycerate. This Bartonella henselae (strain ATCC 49882 / DSM 28221 / CCUG 30454 / Houston 1) (Rochalimaea henselae) protein is 2,3-bisphosphoglycerate-dependent phosphoglycerate mutase.